Here is a 305-residue protein sequence, read N- to C-terminus: Oxygen-dependent coproporphyrinogen-III oxidase (305 aa).

Residue S92 participates in substrate binding. 2 residues coordinate a divalent metal cation: H96 and H106. The Proton donor role is filled by H106. 108-110 (NVR) serves as a coordination point for substrate. A divalent metal cation-binding residues include H145 and H175. Residues 239 to 274 (YVEFNLLFDRGTLFGLQSGGRAESILISLPPLVRWE) are important for dimerization. Position 257–259 (257–259 (GGR)) interacts with substrate.

It belongs to the aerobic coproporphyrinogen-III oxidase family. As to quaternary structure, homodimer. It depends on a divalent metal cation as a cofactor.

It is found in the cytoplasm. It carries out the reaction coproporphyrinogen III + O2 + 2 H(+) = protoporphyrinogen IX + 2 CO2 + 2 H2O. It participates in porphyrin-containing compound metabolism; protoporphyrin-IX biosynthesis; protoporphyrinogen-IX from coproporphyrinogen-III (O2 route): step 1/1. Functionally, involved in the heme biosynthesis. Catalyzes the aerobic oxidative decarboxylation of propionate groups of rings A and B of coproporphyrinogen-III to yield the vinyl groups in protoporphyrinogen-IX. The polypeptide is Oxygen-dependent coproporphyrinogen-III oxidase (Xylella fastidiosa (strain Temecula1 / ATCC 700964)).